The sequence spans 287 residues: Fructose-bisphosphate aldolase (287 aa).

S50 contacts D-glyceraldehyde 3-phosphate. D85 functions as the Proton donor in the catalytic mechanism. Positions 86, 107, 137, and 181 each coordinate Zn(2+). G182 is a dihydroxyacetone phosphate binding site. H209 serves as a coordination point for Zn(2+). Residues G210–T212 and N231–T234 each bind dihydroxyacetone phosphate. Phosphothreonine is present on residues T212 and T234.

Belongs to the class II fructose-bisphosphate aldolase family. Zn(2+) is required as a cofactor.

The enzyme catalyses beta-D-fructose 1,6-bisphosphate = D-glyceraldehyde 3-phosphate + dihydroxyacetone phosphate. The protein operates within carbohydrate degradation; glycolysis; D-glyceraldehyde 3-phosphate and glycerone phosphate from D-glucose: step 4/4. Its function is as follows. Catalyzes the aldol condensation of dihydroxyacetone phosphate (DHAP or glycerone-phosphate) with glyceraldehyde 3-phosphate (G3P) to form fructose 1,6-bisphosphate (FBP) in gluconeogenesis and the reverse reaction in glycolysis. The polypeptide is Fructose-bisphosphate aldolase (fba) (Geobacillus stearothermophilus (Bacillus stearothermophilus)).